Reading from the N-terminus, the 219-residue chain is ATP-dependent dethiobiotin synthetase BioD (219 aa).

12 to 17 contributes to the ATP binding site; the sequence is DLGKTH. Residue T16 participates in Mg(2+) binding. K37 is a catalytic residue. S41 contributes to the substrate binding site. Residues D52, 115 to 118, and 175 to 176 each bind ATP; these read EGAG and SE. Residues D52 and E115 each coordinate Mg(2+).

This sequence belongs to the dethiobiotin synthetase family. Homodimer. Mg(2+) serves as cofactor.

The protein localises to the cytoplasm. It carries out the reaction (7R,8S)-7,8-diammoniononanoate + CO2 + ATP = (4R,5S)-dethiobiotin + ADP + phosphate + 3 H(+). Its pathway is cofactor biosynthesis; biotin biosynthesis; biotin from 7,8-diaminononanoate: step 1/2. Its function is as follows. Catalyzes a mechanistically unusual reaction, the ATP-dependent insertion of CO2 between the N7 and N8 nitrogen atoms of 7,8-diaminopelargonic acid (DAPA, also called 7,8-diammoniononanoate) to form a ureido ring. The sequence is that of ATP-dependent dethiobiotin synthetase BioD from Caulobacter vibrioides (strain ATCC 19089 / CIP 103742 / CB 15) (Caulobacter crescentus).